The primary structure comprises 37 residues: Large ribosomal subunit protein bL36 (37 aa).

This sequence belongs to the bacterial ribosomal protein bL36 family.

In Oleidesulfovibrio alaskensis (strain ATCC BAA-1058 / DSM 17464 / G20) (Desulfovibrio alaskensis), this protein is Large ribosomal subunit protein bL36 (rpmJ).